A 525-amino-acid polypeptide reads, in one-letter code: GMP synthase [glutamine-hydrolyzing] (525 aa).

Residues 9 to 207 (RILILDFGSQ…VRDICQCEAL (199 aa)) form the Glutamine amidotransferase type-1 domain. The Nucleophile role is filled by C86. Active-site residues include H181 and E183. The GMPS ATP-PPase domain occupies 208–400 (WTPAKIIDDA…LGLPYDMLYR (193 aa)). Residue 235–241 (SGGVDSS) coordinates ATP.

Homodimer.

The enzyme catalyses XMP + L-glutamine + ATP + H2O = GMP + L-glutamate + AMP + diphosphate + 2 H(+). It functions in the pathway purine metabolism; GMP biosynthesis; GMP from XMP (L-Gln route): step 1/1. Its function is as follows. Catalyzes the synthesis of GMP from XMP. The protein is GMP synthase [glutamine-hydrolyzing] of Shigella flexneri serotype 5b (strain 8401).